The primary structure comprises 443 residues: Probable cytosolic iron-sulfur protein assembly protein 1 (443 aa).

Disordered regions lie at residues 1–27 and 95–124; these read MSDP…WQTA and REEQ…DDDE. The span at 8 to 21 shows a compositional bias: low complexity; that stretch reads TLSPLATLTPPSSS. WD repeat units follow at residues 14-57 and 61-103; these read TLTP…LLHS and GHKR…GNED. Acidic residues predominate over residues 113-124; sequence AEDEDGRDDDDE. WD repeat units lie at residues 135 to 174, 180 to 219, 221 to 248, 255 to 294, 323 to 362, and 391 to 440; these read GHES…NFET, EHDG…WVQV, CIAG…KDFR, SEEQ…RAEN, VHER…QTPN, and AHSV…DPPQ.

The protein belongs to the WD repeat CIA1 family.

Essential component of the cytosolic iron-sulfur (Fe/S) protein assembly machinery. Required for the maturation of extramitochondrial Fe/S proteins. This is Probable cytosolic iron-sulfur protein assembly protein 1 from Phaeosphaeria nodorum (strain SN15 / ATCC MYA-4574 / FGSC 10173) (Glume blotch fungus).